We begin with the raw amino-acid sequence, 477 residues long: UDP-N-acetylmuramoylalanine--D-glutamate ligase (477 aa).

127 to 133 (GTNGKTT) serves as a coordination point for ATP.

The protein belongs to the MurCDEF family.

Its subcellular location is the cytoplasm. The enzyme catalyses UDP-N-acetyl-alpha-D-muramoyl-L-alanine + D-glutamate + ATP = UDP-N-acetyl-alpha-D-muramoyl-L-alanyl-D-glutamate + ADP + phosphate + H(+). It participates in cell wall biogenesis; peptidoglycan biosynthesis. Functionally, cell wall formation. Catalyzes the addition of glutamate to the nucleotide precursor UDP-N-acetylmuramoyl-L-alanine (UMA). The chain is UDP-N-acetylmuramoylalanine--D-glutamate ligase from Prochlorococcus marinus (strain MIT 9515).